Here is a 483-residue protein sequence, read N- to C-terminus: ATP synthase subunit beta (483 aa).

169–176 (GGAGVGKT) contacts ATP.

It belongs to the ATPase alpha/beta chains family. F-type ATPases have 2 components, CF(1) - the catalytic core - and CF(0) - the membrane proton channel. CF(1) has five subunits: alpha(3), beta(3), gamma(1), delta(1), epsilon(1). CF(0) has three main subunits: a(1), b(2) and c(9-12). The alpha and beta chains form an alternating ring which encloses part of the gamma chain. CF(1) is attached to CF(0) by a central stalk formed by the gamma and epsilon chains, while a peripheral stalk is formed by the delta and b chains.

Its subcellular location is the cell membrane. It catalyses the reaction ATP + H2O + 4 H(+)(in) = ADP + phosphate + 5 H(+)(out). In terms of biological role, produces ATP from ADP in the presence of a proton gradient across the membrane. The catalytic sites are hosted primarily by the beta subunits. This Rhodococcus opacus (strain B4) protein is ATP synthase subunit beta.